Reading from the N-terminus, the 37-residue chain is MRVSASVKTICRNCKVIRRKGVVRVICTDPRHKQRQG.

This sequence belongs to the bacterial ribosomal protein bL36 family.

The protein is Large ribosomal subunit protein bL36 of Variovorax paradoxus (strain S110).